Here is a 407-residue protein sequence, read N- to C-terminus: SERPINE1 mRNA-binding protein 1 (407 aa).

The residue at position 25 (S25) is a Phosphoserine. The segment at A33–V227 is disordered. The segment covering A51–K68 has biased composition (low complexity). K52 bears the N6-acetyllysine; alternate mark. K52 is covalently cross-linked (Glycyl lysine isopeptide (Lys-Gly) (interchain with G-Cter in SUMO1); alternate). N6-acetyllysine is present on K68. Composition is skewed to basic and acidic residues over residues L70–N80, V89–D114, and K122–I162. Residue K102 forms a Glycyl lysine isopeptide (Lys-Gly) (interchain with G-Cter in SUMO1); alternate linkage. K102 is covalently cross-linked (Glycyl lysine isopeptide (Lys-Gly) (interchain with G-Cter in SUMO2)). K102 participates in a covalent cross-link: Glycyl lysine isopeptide (Lys-Gly) (interchain with G-Cter in SUMO2); alternate. 2 positions are modified to N6-acetyllysine: K122 and K140. Residues G164–G182 show a composition bias toward gly residues. R165 and R188 each carry omega-N-methylarginine. Positions D183 to S199 are enriched in basic and acidic residues. A phosphoserine mark is found at S197, S199, S203, S205, and S208. K211 is modified (N6-acetyllysine; alternate). K211 participates in a covalent cross-link: Glycyl lysine isopeptide (Lys-Gly) (interchain with G-Cter in SUMO2); alternate. R216 bears the Omega-N-methylarginine mark. Residue S221 is modified to Phosphoserine. Position 226 is a phosphothreonine (T226). K228 is covalently cross-linked (Glycyl lysine isopeptide (Lys-Gly) (interchain with G-Cter in SUMO1); alternate). K228 is covalently cross-linked (Glycyl lysine isopeptide (Lys-Gly) (interchain with G-Cter in SUMO2); alternate). S234 carries the post-translational modification Phosphoserine. Over residues I242–E256 the composition is skewed to polar residues. Disordered regions lie at residues I242–E291 and S327–A407. Positions G261–N274 are enriched in basic and acidic residues. K280 is covalently cross-linked (Glycyl lysine isopeptide (Lys-Gly) (interchain with G-Cter in SUMO1); alternate). K280 participates in a covalent cross-link: Glycyl lysine isopeptide (Lys-Gly) (interchain with G-Cter in SUMO2). Residue K280 forms a Glycyl lysine isopeptide (Lys-Gly) (interchain with G-Cter in SUMO2); alternate linkage. 2 stretches are compositionally biased toward basic and acidic residues: residues E281–E291 and S327–H341. The residue at position 328 (K328) is an N6-acetyllysine. S329 is subject to Phosphoserine. Positions G362–G371 are enriched in gly residues. An omega-N-methylarginine mark is found at R363, R366, and R369. 2 positions are modified to phosphoserine: S391 and S393.

This sequence belongs to the SERBP1-HABP4 family. In terms of assembly, associates with mature 80S ribosomes. Interacts with EEF2/eEF2; interaction sequesters EEF2/eEF2 at the A-site of the ribosome, thereby blocking the interaction sites of the mRNA-tRNA complex, promoting ribosome stabilization and hibernation. Interacts with SPIN1. Interacts with CHD3 and TDRD3. Interacts with ZDHHC17 (via ANK repeats). Phosphorylation by MTOR inhibits SERBP1 and relieves ribosome hibernation.

Functionally, ribosome-binding protein that promotes ribosome hibernation, a process during which ribosomes are stabilized in an inactive state and preserved from proteasomal degradation. Acts via its association with EEF2/eEF2 factor, sequestering EEF2/eEF2 at the A-site of the ribosome and promoting ribosome stabilization and storage in an inactive state. May also play a role in the regulation of mRNA stability: binds to the 3'-most 134 nt of the SERPINE1/PAI1 mRNA, a region which confers cyclic nucleotide regulation of message decay. Seems to play a role in PML-nuclear bodies formation. This Oryctolagus cuniculus (Rabbit) protein is SERPINE1 mRNA-binding protein 1.